Here is a 267-residue protein sequence, read N- to C-terminus: Glucosamine-6-phosphate deaminase (267 aa).

Asp-71 functions as the Proton acceptor; for enolization step in the catalytic mechanism. Asp-140 functions as the For ring-opening step in the catalytic mechanism. His-142 serves as the catalytic Proton acceptor; for ring-opening step. The For ring-opening step role is filled by Glu-147.

The protein belongs to the glucosamine/galactosamine-6-phosphate isomerase family. Homohexamer.

It localises to the cytoplasm. The enzyme catalyses alpha-D-glucosamine 6-phosphate + H2O = beta-D-fructose 6-phosphate + NH4(+). It participates in nucleotide-sugar biosynthesis; UDP-N-acetyl-alpha-D-glucosamine biosynthesis; alpha-D-glucosamine 6-phosphate from D-fructose 6-phosphate: step 1/1. In terms of biological role, catalyzes the reversible conversion of alpha-D-glucosamine 6-phosphate (GlcN-6P) into beta-D-fructose 6-phosphate (Fru-6P) and ammonium ion, a regulatory reaction step in de novo uridine diphosphate-N-acetyl-alpha-D-glucosamine (UDP-GlcNAc) biosynthesis via hexosamine pathway. This chain is Glucosamine-6-phosphate deaminase, found in Caenorhabditis elegans.